The sequence spans 318 residues: Glutathione synthetase (318 aa).

The ATP-grasp domain occupies lysine 129 to glutamate 314. Residue histidine 155–glycine 211 coordinates ATP. Mg(2+) contacts are provided by glutamate 285 and asparagine 287.

It belongs to the prokaryotic GSH synthase family. Mg(2+) serves as cofactor. The cofactor is Mn(2+).

It catalyses the reaction gamma-L-glutamyl-L-cysteine + glycine + ATP = glutathione + ADP + phosphate + H(+). It functions in the pathway sulfur metabolism; glutathione biosynthesis; glutathione from L-cysteine and L-glutamate: step 2/2. This chain is Glutathione synthetase, found in Bordetella bronchiseptica (strain ATCC BAA-588 / NCTC 13252 / RB50) (Alcaligenes bronchisepticus).